The following is a 487-amino-acid chain: MRVENHSPSLSKLNPPEAGSGDPTAIGRRLSGIRRAPLPHVSAGSDGEAAAAGKIGAFLRKAVAAQSYGLMFANGKLFEATGDALEKRGQYGFSALQRLDGLSRRNLAAVEARLGALDSAERGLKERIMTGAWHFRHQSNAALDDGKTAAIASNHLLARESRSSGGNTFAGDKALLSNHDFVFFGVEFSGRGKQDKPLNHKHSTMDFGANAYVVPDTLPACRHGYLTLTDHFFNRVPGGREAEHQDFVGSFPQMGAETGRWIHEGKYRQNAPIFNYRDMKAAVALHLIEFLRDSKDAAFKAYVFDQAMQSGQALDRVLNSVFQAEFHIPRLMATTDYAKHPLRPMLLKEAVDSVNLPALSGLVSSKGDAVTAMWHAIDKGKDAVAAHLLGNWRFEAGDFASAPPGFYHELNYALSEHGASVYILDQFLSRGWAAVNAPFEHVNSGETMLDNAVKYGNREMAAALIKHGADRNLLSEWNGGKLDALLA.

Positions 1-12 (MRVENHSPSLSK) are enriched in polar residues. The tract at residues 1–27 (MRVENHSPSLSKLNPPEAGSGDPTAIG) is disordered. The NAD(+) site is built by H137, Q138, S139, L143, A150, A152, N154, and L157. Position 137 (H137) interacts with nicotinamide. ADP-D-ribose contacts are provided by S139 and L143. The ADP-D-ribose site is built by A152, N154, L157, G166, N167, T168, and F183. Residue N167 coordinates NAD(+). Residue F183 participates in NAD(+) binding. Residues F183, F184, H202, and F207 each coordinate nicotinamide. H202 contributes to the NAD(+) binding site. ADP-D-ribose-binding residues include F207 and D230. NAD(+)-binding residues include D230 and E325. E325 serves as a coordination point for nicotinamide. E325 is an active-site residue. 2 ANK repeats span residues 368-398 (DAVT…EAGD) and 444-476 (SGET…LLSE).

Belongs to the OspC family. As to quaternary structure, interacts with host calmodulin (CALM1, CALM2 and/or CALM3); specifically interacts with the apo form of calmodulin and calmodulin-binding is required to mediate arginine ADP-riboxanation of host caspases.

It is found in the secreted. Its subcellular location is the host cytoplasm. It catalyses the reaction L-arginyl-[protein] + NAD(+) = ADP-riboxanated L-argininyl-[protein] + nicotinamide + NH4(+) + H(+). Its activity is regulated as follows. Interaction with host calmodulin (CALM1, CALM2 and/or CALM3) is required to mediate arginine ADP-riboxanation of host caspases. Its function is as follows. ADP-riboxanase effector that inhibits host cell programmed cell death. Acts by mediating arginine ADP-riboxanation of host caspases (CASP3, CASP7, CASP8 and CASP9), blocking their processing and activation. ADP-riboxanation of host apoptotic caspases (CASP3, CASP7, CASP8 and CASP9) prevents their activation, thereby inhibiting host cell apoptosis. ADP-riboxanation of host CASP8 also inhibits host cell necroptosis. ADP-riboxanation of host CASP3 also abolishes pyroptosis by preventing its ability to cleave GSDME. May also able to inactivate CASP4/CASP11, blocking inhibiting LPS-induced pyroptosis; however this activity is unsure in vivo. ADP-riboxanation takes place in several steps: CopC first binds host caspases and NAD(+); NAD(+) is hydrolyzed to nicotinamide and ADP-D-ribose. CopC then transfers the ADP-D-ribose to the modified arginine of caspases and forms the ADP-D-ribose-deacylization on arginine, leading to deamination to remove one N-omega group on target arginine. The sequence is that of Arginine ADP-riboxanase CopC from Chromobacterium violaceum (strain ATCC 12472 / DSM 30191 / JCM 1249 / CCUG 213 / NBRC 12614 / NCIMB 9131 / NCTC 9757 / MK).